The chain runs to 416 residues: Serine hydroxymethyltransferase (416 aa).

Residues L119 and 123-125 (GHL) each bind (6S)-5,6,7,8-tetrahydrofolate. Residue K228 is modified to N6-(pyridoxal phosphate)lysine. E243 is a (6S)-5,6,7,8-tetrahydrofolate binding site.

It belongs to the SHMT family. Homodimer. The cofactor is pyridoxal 5'-phosphate.

The protein resides in the cytoplasm. It carries out the reaction (6R)-5,10-methylene-5,6,7,8-tetrahydrofolate + glycine + H2O = (6S)-5,6,7,8-tetrahydrofolate + L-serine. It functions in the pathway one-carbon metabolism; tetrahydrofolate interconversion. It participates in amino-acid biosynthesis; glycine biosynthesis; glycine from L-serine: step 1/1. In terms of biological role, catalyzes the reversible interconversion of serine and glycine with tetrahydrofolate (THF) serving as the one-carbon carrier. This reaction serves as the major source of one-carbon groups required for the biosynthesis of purines, thymidylate, methionine, and other important biomolecules. Also exhibits THF-independent aldolase activity toward beta-hydroxyamino acids, producing glycine and aldehydes, via a retro-aldol mechanism. This is Serine hydroxymethyltransferase from Desulforapulum autotrophicum (strain ATCC 43914 / DSM 3382 / VKM B-1955 / HRM2) (Desulfobacterium autotrophicum).